The sequence spans 330 residues: Carbonic anhydrase 1 (330 aa).

The segment at 1-109 (MSTASAFAIN…AAARIDQITA (109 aa)) is chloroplast transit peptide-like.

Belongs to the beta-class carbonic anhydrase family. Homohexamer.

It is found in the cytoplasm. It carries out the reaction hydrogencarbonate + H(+) = CO2 + H2O. Functionally, reversible hydration of carbon dioxide. This Flaveria linearis (Narrowleaf yellowtops) protein is Carbonic anhydrase 1.